The chain runs to 207 residues: Thiamine-phosphate synthase (207 aa).

Residues 35 to 39 and Asn-67 contribute to the 4-amino-2-methyl-5-(diphosphooxymethyl)pyrimidine site; that span reads QYRDK. Residues Asp-68 and Asp-86 each contribute to the Mg(2+) site. Thr-105 is a binding site for 4-amino-2-methyl-5-(diphosphooxymethyl)pyrimidine. 132–134 lines the 2-[(2R,5Z)-2-carboxy-4-methylthiazol-5(2H)-ylidene]ethyl phosphate pocket; the sequence is SVT. Residue Lys-135 coordinates 4-amino-2-methyl-5-(diphosphooxymethyl)pyrimidine. Residue Gly-162 coordinates 2-[(2R,5Z)-2-carboxy-4-methylthiazol-5(2H)-ylidene]ethyl phosphate.

It belongs to the thiamine-phosphate synthase family. Mg(2+) is required as a cofactor.

It carries out the reaction 2-[(2R,5Z)-2-carboxy-4-methylthiazol-5(2H)-ylidene]ethyl phosphate + 4-amino-2-methyl-5-(diphosphooxymethyl)pyrimidine + 2 H(+) = thiamine phosphate + CO2 + diphosphate. The enzyme catalyses 2-(2-carboxy-4-methylthiazol-5-yl)ethyl phosphate + 4-amino-2-methyl-5-(diphosphooxymethyl)pyrimidine + 2 H(+) = thiamine phosphate + CO2 + diphosphate. The catalysed reaction is 4-methyl-5-(2-phosphooxyethyl)-thiazole + 4-amino-2-methyl-5-(diphosphooxymethyl)pyrimidine + H(+) = thiamine phosphate + diphosphate. It participates in cofactor biosynthesis; thiamine diphosphate biosynthesis; thiamine phosphate from 4-amino-2-methyl-5-diphosphomethylpyrimidine and 4-methyl-5-(2-phosphoethyl)-thiazole: step 1/1. Functionally, condenses 4-methyl-5-(beta-hydroxyethyl)thiazole monophosphate (THZ-P) and 2-methyl-4-amino-5-hydroxymethyl pyrimidine pyrophosphate (HMP-PP) to form thiamine monophosphate (TMP). The sequence is that of Thiamine-phosphate synthase from Pseudomonas putida (strain GB-1).